Here is a 249-residue protein sequence, read N- to C-terminus: Adapter protein MecA (249 aa).

It belongs to the MecA family. Homodimer.

Enables the recognition and targeting of unfolded and aggregated proteins to the ClpC protease or to other proteins involved in proteolysis. The sequence is that of Adapter protein MecA from Streptococcus thermophilus (strain CNRZ 1066).